The chain runs to 171 residues: UPF0398 protein Sez_1569 (171 aa).

It belongs to the UPF0398 family.

The chain is UPF0398 protein Sez_1569 from Streptococcus equi subsp. zooepidemicus (strain MGCS10565).